A 238-amino-acid polypeptide reads, in one-letter code: Phosphatidylcholine synthase (238 aa).

At 1–16 (MPVNLSMTPINKAKAW) the chain is on the cytoplasmic side. A helical transmembrane segment spans residues 17–37 (GVHAVTASGVILALLALLALV). The Periplasmic segment spans residues 38–41 (DNKP). Residues 42–62 (QACLLWLGLALLVDGLDGTLA) traverse the membrane as a helical segment. The Cytoplasmic segment spans residues 63-75 (RKYEVKEMLPHFD). A helical transmembrane segment spans residues 76–96 (GSVLDLVIDYLTYVFIPAIFI). Residues 97–104 (YRYIPLPE) lie on the Periplasmic side of the membrane. The chain crosses the membrane as a helical span at residues 105-125 (HFELLAVGVILVSSLFCFCNV). Over 126–132 (NMKSTDN) the chain is Cytoplasmic. The helical transmembrane segment at 133–153 (YFVGFPAAWNVVAVYFYVLDL) threads the bilayer. The Periplasmic segment spans residues 154–155 (HP). The helical transmembrane segment at 156 to 176 (WVNLATVLVLAALTLTRMKFL) threads the bilayer. Residues 177–183 (HPFRVRQ) lie on the Cytoplasmic side of the membrane. The helical transmembrane segment at 184–204 (FMPLNIAVTFVWLISSGLLIV) threads the bilayer. At 205-209 (QQPAD) the chain is on the periplasmic side. A helical transmembrane segment spans residues 210–230 (LPILLGLWFAASAYFVGICLW). Over 231–238 (RSAREWFG) the chain is Cytoplasmic.

The protein belongs to the CDP-alcohol phosphatidyltransferase class-I family. Requires Mn(2+) as cofactor.

Its subcellular location is the cell inner membrane. It carries out the reaction a CDP-1,2-diacyl-sn-glycerol + choline = a 1,2-diacyl-sn-glycero-3-phosphocholine + CMP + H(+). Condenses choline with CDP-diglyceride to produce phosphatidylcholine and CMP. The polypeptide is Phosphatidylcholine synthase (Pseudomonas aeruginosa (strain ATCC 15692 / DSM 22644 / CIP 104116 / JCM 14847 / LMG 12228 / 1C / PRS 101 / PAO1)).